Reading from the N-terminus, the 378-residue chain is Putative aminoglycoside phosphotransferase (378 aa).

Residues R79 and 134–136 (DYV) contribute to the ATP site. Catalysis depends on D249, which acts as the Proton acceptor. The Mg(2+) site is built by N254, D267, and E269.

The protein belongs to the aminoglycoside phosphotransferase family.

Might catalyze the phosphorylation of aminoglycosides and confer aminoglycoside antibiotics resistance. The chain is Putative aminoglycoside phosphotransferase from Mycobacterium tuberculosis (strain CDC 1551 / Oshkosh).